Here is a 212-residue protein sequence, read N- to C-terminus: ATP-dependent dethiobiotin synthetase BioD (212 aa).

13-18 (GVGKTV) serves as a coordination point for ATP. Thr17 is a binding site for Mg(2+). The active site involves Lys33. Mg(2+) is bound at residue Glu100. Residues 100–103 (EGAG) and 184–186 (PHL) each bind ATP.

This sequence belongs to the dethiobiotin synthetase family. As to quaternary structure, homodimer. It depends on Mg(2+) as a cofactor.

It localises to the cytoplasm. It carries out the reaction (7R,8S)-7,8-diammoniononanoate + CO2 + ATP = (4R,5S)-dethiobiotin + ADP + phosphate + 3 H(+). It participates in cofactor biosynthesis; biotin biosynthesis; biotin from 7,8-diaminononanoate: step 1/2. Functionally, catalyzes a mechanistically unusual reaction, the ATP-dependent insertion of CO2 between the N7 and N8 nitrogen atoms of 7,8-diaminopelargonic acid (DAPA, also called 7,8-diammoniononanoate) to form a ureido ring. This chain is ATP-dependent dethiobiotin synthetase BioD, found in Rhodopseudomonas palustris (strain BisB5).